We begin with the raw amino-acid sequence, 386 residues long: MRIFKSHRLLKLVNSYIIDSPQPTNLSYLWNFGSLLALCLGIQIVTGVTLAMHYSPSITDALYSIEHIMRDVNNGWLIRYLHANTASAFFFLVYLHMGRGIYYGSYQGSRSLTWNIGVVIFIVMIVTAFLGYVLPFGQMSLWGATVITNLLSAIPWINQDLVEFIWGGFSVNNATLNRFFSLHYLLPFILAALVLMHLIALHDTVGSSNPLGISGNYDRLPFAPYFLFKDLVTIFLFMLGLSIFVLFMPNALGDCENYVMANPMQTPAAIVPEWYLLPFYAILRSIPDKTLGVVAMLGAILILMALPYLDKSNIRGMQFKPLSKIAFYIFIANFLVLMILGAKHVEDPFIIFGQISTTLYFSYFIIITPLFSIFDNILFDIATKKK.

A run of 4 helical transmembrane segments spans residues 32-52 (FGSL…TLAM), 76-98 (WLIR…LHMG), 113-133 (TWNI…LGYV), and 179-199 (FFSL…MHLI). Residues histidine 82 and histidine 96 each contribute to the heme b site. Heme b is bound by residues histidine 183 and histidine 197. Position 202 (histidine 202) interacts with a ubiquinone. The next 4 helical transmembrane spans lie at 226–246 (FLFK…IFVL), 290–310 (TLGV…PYLD), 322–342 (LSKI…ILGA), and 349–369 (FIIF…IITP).

It belongs to the cytochrome b family. As to quaternary structure, fungal cytochrome b-c1 complex contains 10 subunits; 3 respiratory subunits, 2 core proteins and 5 low-molecular weight proteins. Cytochrome b-c1 complex is a homodimer. Requires heme b as cofactor.

The protein resides in the mitochondrion inner membrane. In terms of biological role, component of the ubiquinol-cytochrome c reductase complex (complex III or cytochrome b-c1 complex) that is part of the mitochondrial respiratory chain. The b-c1 complex mediates electron transfer from ubiquinol to cytochrome c. Contributes to the generation of a proton gradient across the mitochondrial membrane that is then used for ATP synthesis. The chain is Cytochrome b (COB) from Trichophyton rubrum (Athlete's foot fungus).